The following is a 345-amino-acid chain: MRLSDFDYELPEELVAQEPVTPRDASRLLVLPREGAAEHRAFTDLPDLLAPGDLLVFNDTKVIPARLVGTKPTGGKVELLLCEPLGGGLGSRWRAMGQASKPIREGTTLLFEGLEARVEASEGEGFYVVTLDREGEALEAALARAGRIPLPPYIRRAPSDVDRERYQTIWARAPGSAAAPTAGLHFTEAILARLAARGVERTAVTLHVGPGTFLPVRGDSVEGHRMHAEQYEVRPEAAAAIAACRARGSRVVAVGTTSVRTLESAWRGGAVAAGAGRTALFVRPGHAFRAVDALVTNFHLPRSTLLMLVCAFGGTHRVLAAYRDAVARRYRFFSYGDAMLLARAD.

It belongs to the QueA family. In terms of assembly, monomer.

The protein localises to the cytoplasm. The enzyme catalyses 7-aminomethyl-7-carbaguanosine(34) in tRNA + S-adenosyl-L-methionine = epoxyqueuosine(34) in tRNA + adenine + L-methionine + 2 H(+). The protein operates within tRNA modification; tRNA-queuosine biosynthesis. Transfers and isomerizes the ribose moiety from AdoMet to the 7-aminomethyl group of 7-deazaguanine (preQ1-tRNA) to give epoxyqueuosine (oQ-tRNA). In Anaeromyxobacter sp. (strain Fw109-5), this protein is S-adenosylmethionine:tRNA ribosyltransferase-isomerase.